The primary structure comprises 55 residues: Rubredoxin-2 (55 aa).

The Rubredoxin-like domain maps to 1 to 54 (MRKWQCVVCGFIYDEALGLPEEGIPAGTRWEDIPADWVCPDCGVGKIDFEMIEI). Residues cysteine 6, cysteine 9, cysteine 39, and cysteine 42 each contribute to the Fe cation site.

Belongs to the rubredoxin family. The cofactor is Fe(3+).

The protein localises to the cytoplasm. Its pathway is hydrocarbon metabolism; alkane degradation. In terms of biological role, involved in the hydrocarbon hydroxylating system, which transfers electrons from NADH to rubredoxin reductase and then through rubredoxin to alkane 1 monooxygenase. The polypeptide is Rubredoxin-2 (rubA2) (Pseudomonas aeruginosa (strain ATCC 15692 / DSM 22644 / CIP 104116 / JCM 14847 / LMG 12228 / 1C / PRS 101 / PAO1)).